The following is a 273-amino-acid chain: MAVVKCKPTSPGRRHVVKVVNPELHKGKPFAPLVEKNSKSGGRNNNGRITTRHIGGGHKQAYRIVDFKRNKDGIPAVVERLEYDPNRSANIALVLYKDGERRYILAPKGLKAGDQIQSGVDAAIKAGNTLPMRNIPVGSTVHNVEMKPGKGGQLARSAGTYVQIVARDGAYVTLRLRSGEMRKVEADCRATLGEVGNAEHMLRVLGKAGAARWRGVRPTVRGTAMNPVDHPHGGGEGRNFGKHPVTPWGVQTKGKKTRSNKRTDKFIVRRRSK.

Disordered stretches follow at residues 28 to 53 (KPFA…TTRH) and 221 to 273 (RGTA…RRSK). The span at 39-48 (KSGGRNNNGR) shows a compositional bias: low complexity.

This sequence belongs to the universal ribosomal protein uL2 family. In terms of assembly, part of the 50S ribosomal subunit. Forms a bridge to the 30S subunit in the 70S ribosome.

One of the primary rRNA binding proteins. Required for association of the 30S and 50S subunits to form the 70S ribosome, for tRNA binding and peptide bond formation. It has been suggested to have peptidyltransferase activity; this is somewhat controversial. Makes several contacts with the 16S rRNA in the 70S ribosome. This chain is Large ribosomal subunit protein uL2, found in Salmonella agona (strain SL483).